A 406-amino-acid polypeptide reads, in one-letter code: CinA-like protein (406 aa).

It belongs to the CinA family.

The polypeptide is CinA-like protein (Deinococcus geothermalis (strain DSM 11300 / CIP 105573 / AG-3a)).